We begin with the raw amino-acid sequence, 218 residues long: Probable signal peptidase I-2 (218 aa).

Topologically, residues 1–26 are cytoplasmic; it reads MTENIVRETSKKKESPPENTWLELGK. The helical transmembrane segment at 27–43 threads the bilayer; the sequence is TMVTAVILAIGIRTFVA. At 44 to 218 the chain is on the periplasmic side; the sequence is EARYIPSSSM…ISPQTVPESR (175 aa). Active-site residues include Ser52 and Lys100.

It belongs to the peptidase S26 family.

The protein localises to the cell membrane. It carries out the reaction Cleavage of hydrophobic, N-terminal signal or leader sequences from secreted and periplasmic proteins.. The polypeptide is Probable signal peptidase I-2 (lepB2) (Synechocystis sp. (strain ATCC 27184 / PCC 6803 / Kazusa)).